The primary structure comprises 168 residues: Peptide methionine sulfoxide reductase 2 (168 aa).

One can recognise a MsrB domain in the interval 40–168 (DVKWNDALTP…NSASLNLKKD (129 aa)). Zn(2+) is bound by residues cysteine 79, cysteine 82, cysteine 128, and cysteine 131. A disulfide bridge links cysteine 97 with cysteine 157. The Nucleophile role is filled by cysteine 157.

This sequence belongs to the MsrB Met sulfoxide reductase family. It depends on Zn(2+) as a cofactor.

The enzyme catalyses L-methionyl-[protein] + [thioredoxin]-disulfide + H2O = L-methionyl-(R)-S-oxide-[protein] + [thioredoxin]-dithiol. Its function is as follows. Methionine-R-sulfoxide reductase which catalyzes the reduction of methionine sulfoxide (MetSO) to methionine in proteins. Plays a protective role against oxidative stress by restoring activity to proteins that have been inactivated by methionine oxidation. Protects iron-sulfur clusters from oxidative inactivation along with MXR1. Involved in the regulation of lifespan. The chain is Peptide methionine sulfoxide reductase 2 (MXR2) from Saccharomyces cerevisiae (strain ATCC 204508 / S288c) (Baker's yeast).